We begin with the raw amino-acid sequence, 199 residues long: Glycerol-3-phosphate acyltransferase (199 aa).

Helical transmembrane passes span 3-23 (AAVWTLLLAYLFGSIPAGVLV), 50-70 (WGPALVVAFFDVFKGGIAVLV), 78-98 (DWMLGGVALMAVLGHNYSVFL), 113-133 (LLFLDPALALWTFPIGLSVIL), and 154-174 (LALGRPLWEVATVFLMALLIF).

Belongs to the PlsY family. In terms of assembly, probably interacts with PlsX.

It is found in the cell inner membrane. It carries out the reaction an acyl phosphate + sn-glycerol 3-phosphate = a 1-acyl-sn-glycero-3-phosphate + phosphate. It participates in lipid metabolism; phospholipid metabolism. Its function is as follows. Catalyzes the transfer of an acyl group from acyl-phosphate (acyl-PO(4)) to glycerol-3-phosphate (G3P) to form lysophosphatidic acid (LPA). This enzyme utilizes acyl-phosphate as fatty acyl donor, but not acyl-CoA or acyl-ACP. This Thermus thermophilus (strain ATCC BAA-163 / DSM 7039 / HB27) protein is Glycerol-3-phosphate acyltransferase.